A 102-amino-acid chain; its full sequence is Urease subunit beta (102 aa).

This sequence belongs to the urease beta subunit family. In terms of assembly, heterotrimer of UreA (gamma), UreB (beta) and UreC (alpha) subunits. Three heterotrimers associate to form the active enzyme.

The protein localises to the cytoplasm. The enzyme catalyses urea + 2 H2O + H(+) = hydrogencarbonate + 2 NH4(+). Its pathway is nitrogen metabolism; urea degradation; CO(2) and NH(3) from urea (urease route): step 1/1. In Clostridium perfringens, this protein is Urease subunit beta.